The chain runs to 351 residues: Trans-enoyl reductase grgB (351 aa).

Residues 10 to 346 (GAESGGYRLA…GKVHAKKLVV (337 aa)) form the Enoyl reductase (ER) domain. Residues 161–164 (ATAT), 184–187 (SPAN), Tyr-202, 249–250 (LE), and 339–340 (VH) contribute to the NADP(+) site.

Belongs to the zinc-containing alcohol dehydrogenase family.

It participates in secondary metabolite biosynthesis. Trans-enoyl reductase; part of the gene cluster that mediates the biosynthesis of gregatin A, a fungal polyketide featuring an alkylated furanone core. The PKS grgA synthesizes C11 and C4 polyketide chains in the presence and absence of the trans-enoyl reductase grgB, respectively. The polyketide transferase grgF is then responsible for the fusion of the two carbon chains to produce the furanone skeleton of gregatin A. Next, the cytochrome P450 monooxygenase grgG accepts performs the oxidative cyclization to furnish the gregatin scaffold and leads to the formation of desmethylgregatin A. Finally, the O-methyltransferase grgD methylates the carboxyl group of desmethylgregatin A to provide gregatin A. The chain is Trans-enoyl reductase grgB from Penicillium sp.